A 1026-amino-acid polypeptide reads, in one-letter code: MRFFALFIYRPVATILIAAAITLCGILGFRLLPVAPLPQVDFPVIMVSASLPGASPETMASSVATPLERSLGRIAGVNEMTSSSSLGSTRIILEFNFDRDINGAARDVQAAINAAQSLLPSGMPSRPTYRKANPSDAPIMILTLTSESWSQGKLYDFASTQLAQTIAQIDGVGDVDVGGSSLPAVRVGLNPQALFNQGVSLDEVREAIDSANVRRPQGAIEDSVHRWQIQTNDELKTAAEYQPLIIHYNNGAAVRLGDVASVTDSVQDVRNAGMTNAKPAILLMIRKLPEANIIQTVDGIRAKLPELRAMIPAAIDLQIAQDRSPTIRASLQEVEETLAISVALVILVVFLFLRSGRATLIPAVAVPVSLIGTFAAMYLCGFSLNNLSLMALTIATGFVVDDAIVVLENIARHLEAGMKPLQAALQGTREVGFTVISMSLSLVAVFLPLLLMGGLPGRLLREFAVTLSVAIGISLVVSLTLTPMMCGWMLKSSKPRTQPRKRGVGRLLVALQQGYGTSLKWVLNHTRLVGVVFLGTVALNIWLYIAIPKTFFPEQDTGVLMGGIQADQSISFQAMRGKLQDFMKIIRDDPAVNNVTGFTGGSRVNSGMMFITLKPRGERKETAQQIIDRLRVKLAKEPGARLFLMAVQDIRVGGRQANASYQYTLLSDSLAALREWEPKIRKALSALPQLADVNSDQQDNGAEMNLIYDRDTMSRLGIDVQAANSLLNNAFGQRQISTIYQPMNQYKVVMEVDPRYSQDISALEKMFVINRDGKAIPLSYFAQWRPANAPLSVNHQGLSAASTIAFNLPTGTSLSQATEAINRTMTQLGVPSTVRGSFSGTAQVFQQTMNSQLILIVAAIATVYIVLGILYESYVHPLTILSTLPSAGVGALLALELFNAPFSLIALIGIMLLIGIVKKNAIMMVDFALEAQRSGGLTPEQAIFQACLLRFRPIMMTTLAALFGALPLVLSGGDGSELRQPLGITIVGGLVMSQLLTLYTTPVVYLFFDRLRLRFSRKNSKPVVEI.

11 helical membrane-spanning segments follow: residues 15–35, 333–353, 360–380, 387–407, 431–451, 463–483, 528–548, 853–873, 897–917, 953–973, and 984–1004; these read ILIAAAITLCGILGFRLLPVA, EVEETLAISVALVILVVFLFL, LIPAVAVPVSLIGTFAAMYLC, LSLMALTIATGFVVDDAIVVL, VGFTVISMSLSLVAVFLPLLL, FAVTLSVAIGISLVVSLTLTP, LVGVVFLGTVALNIWLYIAIP, LILIVAAIATVYIVLGILYES, LFNAPFSLIALIGIMLLIGIV, PIMMTTLAALFGALPLVLSGG, and ITIVGGLVMSQLLTLYTTPVV.

Belongs to the resistance-nodulation-cell division (RND) (TC 2.A.6) family. MdtC subfamily. As to quaternary structure, part of a tripartite efflux system composed of MdtA, MdtB and MdtC. MdtC forms a heteromultimer with MdtB.

It is found in the cell inner membrane. The protein is Multidrug resistance protein MdtC of Salmonella newport (strain SL254).